Here is a 161-residue protein sequence, read N- to C-terminus: Nucleotide-binding protein PputGB1_4497 (161 aa).

This sequence belongs to the YajQ family.

Its function is as follows. Nucleotide-binding protein. This Pseudomonas putida (strain GB-1) protein is Nucleotide-binding protein PputGB1_4497.